The chain runs to 192 residues: Sarcoplasmic calcium-binding protein 1 (192 aa).

A1 is modified (N-acetylalanine). EF-hand domains lie at 4-39, 56-91, 100-135, and 136-171; these read WDNRVKYVVRYMYDIDNNGFLDKNDFECLALRNTLI, IMSNLWNEIAELADFNKDGEVTIDEFKKAVQNVCVG, AFKVFIANQFKTVDVNGDGLVGVDEYRLDCISRSAF, and ANIKEIDDAYNKLATDADKKAGGISLARYQELYAQF. Positions 17, 19, 21, 28, 69, 71, 73, 75, 80, 113, 115, 117, and 124 each coordinate Ca(2+).

In terms of assembly, SCPs from crayfish, lobster, and shrimp are polymorphic dimers.

In terms of biological role, like parvalbumins, SCPs seem to be more abundant in fast contracting muscles, but no functional relationship can be established from this distribution. This chain is Sarcoplasmic calcium-binding protein 1, found in Astacus leptodactylus (Turkish narrow-clawed crayfish).